We begin with the raw amino-acid sequence, 784 residues long: SWI/SNF complex subunit SWI3C homolog (784 aa).

The segment covering 1–10 (MPRKASSTSD) has biased composition (polar residues). Residues 1-68 (MPRKASSTSD…PEDADDETLA (68 aa)) are disordered. Low complexity predominate over residues 24-39 (ASPSPSNRSSAAAAAA). A compositionally biased stretch (acidic residues) spans 43–66 (DDSDSAAVNEDDDSAVPEDADDET). The 100-residue stretch at 185 to 284 (HVVPKHSDWF…YLASGSVHRG (100 aa)) folds into the SWIRM domain. The segment at 355-409 (LSESSCSYCLQPLTSLHYQSLKEADIALCSDCFHDARYITGHSSLDFQRIDGDND) adopts a ZZ-type; degenerate zinc-finger fold. Residues cysteine 360, cysteine 363, cysteine 383, and cysteine 386 each contribute to the Zn(2+) site. The SANT domain occupies 413 to 464 (NDGDSWTDQETLLLLEGIEKYNDNWNNIAEHVGTKSKAQCIYHFIRLPVEDG). 2 disordered regions span residues 667-702 (LASP…SMPQ) and 760-784 (GMPN…SSVG). Positions 675–695 (PGGSTSTMSSNPMSMSPRPMG) are enriched in low complexity.

Interacts with LFR. Interacts with NMCP1.

The protein localises to the nucleus. The protein resides in the nucleoplasm. Component of a multiprotein complex equivalent of the SWI/SNF complex, an ATP-dependent chromatin-remodeling complex, which is required for the positive and negative regulation of gene expression of a large number of genes. It changes chromatin structure by altering DNA-histone contacts within a nucleosome, leading eventually to a change in nucleosome position, thus facilitating or repressing binding of gene-specific transcription factors. May be involved in positive response to drought stress and modulation of root growth through its interaction with NMCP1. This is SWI/SNF complex subunit SWI3C homolog from Oryza sativa subsp. japonica (Rice).